Consider the following 416-residue polypeptide: Lysosome-associated membrane glycoprotein 3 (416 aa).

An N-terminal signal peptide occupies residues 1–27; it reads MPRQLSAAAVLFASLAVILHDGSQMRA. Topologically, residues 28-381 are lumenal; that stretch reads KAFPKTRDYS…NVDECSSDYT (354 aa). Residues 135 to 217 are disordered; sequence PPTITPPAHT…ASTVPGSTLA (83 aa). The span at 142–170 shows a compositional bias: polar residues; sequence AHTTGTSSSTVNHTTGNATQPSNQTTLPA. The span at 188–208 shows a compositional bias: low complexity; the sequence is PTHAPGTTAAAHNTTRTAAPA. Asn-200 carries N-linked (GlcNAc...) asparagine glycosylation. Cys-237 and Cys-274 form a disulfide bridge. Asn-291 is a glycosylation site (N-linked (GlcNAc...) asparagine). Residues Cys-339 and Cys-376 are joined by a disulfide bond. Residues 382–402 traverse the membrane as a helical segment; the sequence is IVLPVIGAIVVGLCLVGMGVY. Over 403-416 the chain is Cytoplasmic; the sequence is KIRLRCQSSGYQRI.

The protein belongs to the LAMP family. Monomer. Interacts with FURIN.

It is found in the cell surface. The protein resides in the lysosome membrane. The protein localises to the cytoplasmic vesicle membrane. Its subcellular location is the early endosome membrane. In terms of biological role, lysosomal membrane glycoprotein which plays a role in the unfolded protein response (UPR) that contributes to protein degradation and cell survival during proteasomal dysfunction. Plays a role in the process of fusion of the lysosome with the autophagosome, thereby modulating the autophagic process. Promotes hepatocellular lipogenesis through activation of the PI3K/Akt pathway. May also play a role in dendritic cell function and in adaptive immunity. This is Lysosome-associated membrane glycoprotein 3 (LAMP3) from Macaca mulatta (Rhesus macaque).